A 968-amino-acid chain; its full sequence is Protein translocase subunit SecA 1 (968 aa).

Residues glutamine 86, 104–108 (GEGKT), and aspartate 493 each bind ATP. Composition is skewed to basic and acidic residues over residues 858-868 (EAEKTEDKAED) and 883-898 (ESAK…ESVA). The interval 858-968 (EAEKTEDKAE…KCHGAPKSRV (111 aa)) is disordered. Cysteine 949, cysteine 951, cysteine 960, and histidine 961 together coordinate Zn(2+). Over residues 955-968 (KKYKKCHGAPKSRV) the composition is skewed to basic residues.

This sequence belongs to the SecA family. Monomer and homodimer. Part of the essential Sec protein translocation apparatus which comprises SecA, SecYEG and auxiliary proteins SecDF. Other proteins may also be involved. Zn(2+) serves as cofactor.

It localises to the cell membrane. Its subcellular location is the cytoplasm. The enzyme catalyses ATP + H2O + cellular proteinSide 1 = ADP + phosphate + cellular proteinSide 2.. Part of the Sec protein translocase complex. Interacts with the SecYEG preprotein conducting channel. Has a central role in coupling the hydrolysis of ATP to the transfer of proteins into and across the cell membrane, serving as an ATP-driven molecular motor driving the stepwise translocation of polypeptide chains across the membrane. This chain is Protein translocase subunit SecA 1, found in Thermobifida fusca (strain YX).